The chain runs to 294 residues: Undecaprenyl-diphosphatase (294 aa).

Helical transmembrane passes span 39-59 (PGAA…ILYF), 93-113 (TQMG…GLLF), 123-143 (NLWI…VVDA), 197-217 (VSFL…AVSA), 234-254 (ATIA…IGFL), and 265-285 (FAIY…CGVL).

It belongs to the UppP family.

Its subcellular location is the cell membrane. The enzyme catalyses di-trans,octa-cis-undecaprenyl diphosphate + H2O = di-trans,octa-cis-undecaprenyl phosphate + phosphate + H(+). Catalyzes the dephosphorylation of undecaprenyl diphosphate (UPP). Confers resistance to bacitracin. The protein is Undecaprenyl-diphosphatase of Bifidobacterium adolescentis (strain ATCC 15703 / DSM 20083 / NCTC 11814 / E194a).